We begin with the raw amino-acid sequence, 575 residues long: DNA polymerase (575 aa).

The 3'-5' exonuclease and strand displacement activities stretch occupies residues 1–191 (MKHMPRKMYS…KQGLDRMTAG (191 aa)). Mg(2+) is bound by residues Asp145 and Asp169. The segment at 192–229 (SDSLKGFKDIITTKKFKKVFPTLSLGLDKEVRYAYRGG) is involved in DNA-binding, coordination between DNA synthesis and degradation and TP interaction. The interval 230–562 (FTWLNDRFKE…KMKPKPVQVP (333 aa)) is initiation, polymerization and pyrophosphorolytic activities. Residues Asp249 and Val250 each contribute to the Mg(2+) site. The 5-methyl-UTP site is built by Tyr254, Lys371, and Lys383. A TPR2 region spans residues 398–420 (DVTGKVPYLKENGALGFRLGEEE). The YCDTD motif lies at 454 to 458 (YCDTD). Asp456 and Asp458 together coordinate Mg(2+). Asp458 lines the 5-methyl-UTP pocket. Residues 563–575 (GGVVLVDDTFTIK) form an involved in DNA-binding and TP interaction region.

This sequence belongs to the DNA polymerase type-B family. Interacts with the primer terminal protein; this interaction allows the initiation of TP-primed DNA replication at both viral DNA ends. Interacts with DNA. It depends on Mg(2+) as a cofactor.

It carries out the reaction DNA(n) + a 2'-deoxyribonucleoside 5'-triphosphate = DNA(n+1) + diphosphate. Functionally, polymerase responsible for protein-primed viral DNA replication by strand displacement with high processivity and fidelity. To start replication, the DNA polymerase forms a heterodimer with a free primer terminal protein (TP), recognizes the replication origins at both 5' ends of the linear chromosome, and initiates replication using as primer the OH-group of Ser-232 of the TP. This polymerase possesses three enzymatic activities: DNA synthesis (polymerase), primer terminal protein (TP) deoxynucleotidylation, which is the formation of a covalent linkage (phosphoester) between the hydroxyl group of a specific serine residue in TP and 5'-dAMP, a reaction directed by the second T at the 3' end, and 3' to 5' exonuclease activity. Exonuclease activity has a proofreading purpose. DNA polymerase edits the polymerization errors using an intramolecular pathway as the primer terminus travels from one active site to the other without dissociation from the DNA. DNA polymerization catalyzed by the DNA polymerase is a highly accurate process, but the protein-primed initiation is a quite inaccurate reaction. Since the polymerase initiates the replication on the second thymine, the TP-dAMP initiation product translocates backwards to recover the template information of the first nucleotide (sliding back-mechanism). This is DNA polymerase (2) from Bacillus subtilis (Bacteriophage phi-29).